The following is a 236-amino-acid chain: Phosphoribosylaminoimidazole-succinocarboxamide synthase (236 aa).

This sequence belongs to the SAICAR synthetase family.

It catalyses the reaction 5-amino-1-(5-phospho-D-ribosyl)imidazole-4-carboxylate + L-aspartate + ATP = (2S)-2-[5-amino-1-(5-phospho-beta-D-ribosyl)imidazole-4-carboxamido]succinate + ADP + phosphate + 2 H(+). Its pathway is purine metabolism; IMP biosynthesis via de novo pathway; 5-amino-1-(5-phospho-D-ribosyl)imidazole-4-carboxamide from 5-amino-1-(5-phospho-D-ribosyl)imidazole-4-carboxylate: step 1/2. This chain is Phosphoribosylaminoimidazole-succinocarboxamide synthase (purC), found in Lactococcus lactis subsp. lactis (strain IL1403) (Streptococcus lactis).